Here is a 274-residue protein sequence, read N- to C-terminus: Histone H1.1 (274 aa).

Disordered regions lie at residues 1–63 and 129–155; these read MSEV…SSHP and PSAS…PATV. The residue at position 2 (serine 2) is an N-acetylserine. A compositionally biased stretch (low complexity) spans 16–25; it reads TAADAPVTDA. Positions 40–49 are enriched in basic and acidic residues; sequence NVKEVKEKKT. An H15 domain is found at 61–130; sequence SHPTYEEMIK…KVKASFKLPS (70 aa). A compositionally biased stretch (low complexity) spans 129–145; it reads PSASAKASSPKAAAEKS. A Glycyl lysine isopeptide (Lys-Gly) (interchain with G-Cter in ubiquitin) cross-link involves residue lysine 161. 2 disordered regions span residues 167-233 and 249-274; these read ASKA…PAKK and KTPV…RVKK. 2 stretches are compositionally biased toward low complexity: residues 175–185 and 221–233; these read AVKPKTAAAKK and AAKT…PAKK.

It belongs to the histone H1/H5 family.

The protein localises to the nucleus. The protein resides in the chromosome. Histones H1 are necessary for the condensation of nucleosome chains into higher-order structures. This chain is Histone H1.1, found in Arabidopsis thaliana (Mouse-ear cress).